The chain runs to 240 residues: Probable alpha-aspartyl dipeptidase (240 aa).

Active-site charge relay system residues include serine 125, aspartate 140, and histidine 162.

It belongs to the peptidase S51 family.

It localises to the cytoplasm. It catalyses the reaction Dipeptidase E catalyzes the hydrolysis of dipeptides Asp-|-Xaa. It does not act on peptides with N-terminal Glu, Asn or Gln, nor does it cleave isoaspartyl peptides.. Functionally, hydrolyzes dipeptides containing N-terminal aspartate residues. In Drosophila melanogaster (Fruit fly), this protein is Probable alpha-aspartyl dipeptidase.